Consider the following 205-residue polypeptide: uncharacterized protein (205 aa).

Residues 26-129 (DWHHVSRVAD…VQDADRLDAI (104 aa)) form the HD domain.

This is an uncharacterized protein from Bacillus subtilis (strain 168).